The primary structure comprises 430 residues: UDP-N-acetylglucosamine 1-carboxyvinyltransferase 1 (430 aa).

22 to 23 (KN) is a phosphoenolpyruvate binding site. Arg-93 lines the UDP-N-acetyl-alpha-D-glucosamine pocket. Catalysis depends on Cys-117, which acts as the Proton donor. Cys-117 is modified (2-(S-cysteinyl)pyruvic acid O-phosphothioketal). UDP-N-acetyl-alpha-D-glucosamine is bound by residues 122 to 126 (RPVDL), Asp-305, and Val-327.

It belongs to the EPSP synthase family. MurA subfamily.

It localises to the cytoplasm. The enzyme catalyses phosphoenolpyruvate + UDP-N-acetyl-alpha-D-glucosamine = UDP-N-acetyl-3-O-(1-carboxyvinyl)-alpha-D-glucosamine + phosphate. It functions in the pathway cell wall biogenesis; peptidoglycan biosynthesis. Its function is as follows. Cell wall formation. Adds enolpyruvyl to UDP-N-acetylglucosamine. The sequence is that of UDP-N-acetylglucosamine 1-carboxyvinyltransferase 1 from Listeria innocua serovar 6a (strain ATCC BAA-680 / CLIP 11262).